The following is a 649-amino-acid chain: Serine/threonine kinase-like domain-containing protein STKLD1 (649 aa).

Basic and acidic residues predominate over residues 1–13 (MLGPESDGRRPTQ). Residues 1 to 23 (MLGPESDGRRPTQGERGPGYPGE) form a disordered region. In terms of domain architecture, Protein kinase spans 28–379 (YQVLYQLNPG…CNQAITSAVL (352 aa)). ATP contacts are provided by residues 34–42 (LNPGALGVN) and K57. Residues 621–640 (FSKPGLPPGGSPQPGCTASG) form a disordered region.

This sequence belongs to the protein kinase superfamily. Ser/Thr protein kinase family. STKL subfamily.

In Macaca fascicularis (Crab-eating macaque), this protein is Serine/threonine kinase-like domain-containing protein STKLD1 (STKLD1).